The chain runs to 73 residues: Large ribosomal subunit protein bL31 (73 aa).

Belongs to the bacterial ribosomal protein bL31 family. Type A subfamily. As to quaternary structure, part of the 50S ribosomal subunit.

Functionally, binds the 23S rRNA. This is Large ribosomal subunit protein bL31 (rpmE) from Ruegeria pomeroyi (strain ATCC 700808 / DSM 15171 / DSS-3) (Silicibacter pomeroyi).